The primary structure comprises 163 residues: Augmin complex subunit wac (163 aa).

The stretch at E86–L115 forms a coiled coil.

As to quaternary structure, component of the augmin complex composed of dgt2, dgt3, dgt4, dgt5, dgt6, msd1, msd5 and wac. The complex interacts directly or indirectly with microtubules and is required for centrosome-independent generation of spindle microtubules. wac interacts directly (via coiled coil) with dgt2. In terms of tissue distribution, in adult females, detected only in the abdomen with no expression in the head or thorax (at protein level).

It localises to the cytoplasm. The protein resides in the cytoskeleton. Its subcellular location is the spindle. It is found in the spindle pole. Its function is as follows. As part of the augmin complex, plays a role in centrosome-independent generation of spindle microtubules. The complex is required for mitotic spindle assembly through its involvement in localizing gamma-tubulin to spindle microtubules. wac is dispensable for somatic mitosis and for assembly of spindle microtubules in oocytes during female meiosis but is required during female meiosis for chromosome alignment and segregation. It is required for microtubule assembly near spindle poles in oocytes. It is also required for acentrosomal microtubule nucleation and meiotic spindle formation during male meiosis. wac binds to microtubules in vitro. In Drosophila melanogaster (Fruit fly), this protein is Augmin complex subunit wac.